We begin with the raw amino-acid sequence, 451 residues long: Tubulin beta-1 chain (451 aa).

An MREI motif motif is present at residues 1 to 4 (MREI). Residues Gln11, Glu69, Ser138, Gly142, Thr143, and Gly144 each coordinate GTP. Position 69 (Glu69) interacts with Mg(2+). Ser172 carries the post-translational modification Phosphoserine; by CDK1. GTP-binding residues include Asn204 and Asn226. The tract at residues 430 to 451 (AGLEDSEEDVEEAEVEAEDKDH) is disordered. A compositionally biased stretch (acidic residues) spans 433-451 (EDSEEDVEEAEVEAEDKDH). Phosphoserine is present on Ser435. Glu440 bears the 5-glutamyl polyglutamate mark.

It belongs to the tubulin family. In terms of assembly, dimer of alpha and beta chains. A typical microtubule is a hollow water-filled tube with an outer diameter of 25 nm and an inner diameter of 15 nM. Alpha-beta heterodimers associate head-to-tail to form protofilaments running lengthwise along the microtubule wall with the beta-tubulin subunit facing the microtubule plus end conferring a structural polarity. Microtubules usually have 13 protofilaments but different protofilament numbers can be found in some organisms and specialized cells. Interacts with RANBP10. Mg(2+) serves as cofactor. Post-translationally, some glutamate residues at the C-terminus are polyglycylated, resulting in polyglycine chains on the gamma-carboxyl group. Glycylation is mainly limited to tubulin incorporated into axonemes (cilia and flagella) whereas glutamylation is prevalent in neuronal cells, centrioles, axonemes, and the mitotic spindle. Both modifications can coexist on the same protein on adjacent residues, and lowering polyglycylation levels increases polyglutamylation, and reciprocally. Cilia and flagella glycylation is required for their stability and maintenance. Flagella glycylation controls sperm motility. In terms of processing, some glutamate residues at the C-terminus are polyglutamylated, resulting in polyglutamate chains on the gamma-carboxyl group. Polyglutamylation plays a key role in microtubule severing by spastin (SPAST). SPAST preferentially recognizes and acts on microtubules decorated with short polyglutamate tails: severing activity by SPAST increases as the number of glutamates per tubulin rises from one to eight, but decreases beyond this glutamylation threshold. Glutamylation is also involved in cilia motility. Phosphorylated on Ser-172 by CDK1 during the cell cycle, from metaphase to telophase, but not in interphase. This phosphorylation inhibits tubulin incorporation into microtubules.

The protein resides in the cytoplasm. Its subcellular location is the cytoskeleton. Its function is as follows. Tubulin is the major constituent of microtubules, a cylinder consisting of laterally associated linear protofilaments composed of alpha- and beta-tubulin heterodimers. Microtubules grow by the addition of GTP-tubulin dimers to the microtubule end, where a stabilizing cap forms. Below the cap, tubulin dimers are in GDP-bound state, owing to GTPase activity of alpha-tubulin. This is Tubulin beta-1 chain (Tubb1) from Mus musculus (Mouse).